Here is a 443-residue protein sequence, read N- to C-terminus: Adenylyltransferase and sulfurtransferase UBA4 (443 aa).

Residues G81, D102, 109 to 113, K126, and 170 to 171 contribute to the ATP site; these read SNLHR and DS. Zn(2+)-binding residues include C212 and C215. Residue C229 is the Glycyl thioester intermediate; for adenylyltransferase activity of the active site. Residues C290 and C293 each contribute to the Zn(2+) site. One can recognise a Rhodanese domain in the interval 342–441; that stretch reads KERGFVCLDV…YIDEINPSLP (100 aa). Residue C400 is the Cysteine persulfide intermediate; for sulfurtransferase activity of the active site.

This sequence in the N-terminal section; belongs to the HesA/MoeB/ThiF family. UBA4 subfamily. Zn(2+) is required as a cofactor.

Its subcellular location is the cytoplasm. It localises to the cytosol. It functions in the pathway tRNA modification; 5-methoxycarbonylmethyl-2-thiouridine-tRNA biosynthesis. In terms of biological role, plays a central role in 2-thiolation of mcm(5)S(2)U at tRNA wobble positions of cytosolic tRNA(Lys), tRNA(Glu) and tRNA(Gln). Acts by mediating the C-terminal thiocarboxylation of sulfur carrier URM1. Its N-terminus first activates URM1 as acyl-adenylate (-COAMP), then the persulfide sulfur on the catalytic cysteine is transferred to URM1 to form thiocarboxylation (-COSH) of its C-terminus. The reaction probably involves hydrogen sulfide that is generated from the persulfide intermediate and that acts as a nucleophile towards URM1. Subsequently, a transient disulfide bond is formed. Does not use thiosulfate as sulfur donor; NFS1 probably acting as a sulfur donor for thiocarboxylation reactions. Prior mcm(5) tRNA modification by the elongator complex is required for 2-thiolation. May also be involved in protein urmylation. In Eremothecium gossypii (strain ATCC 10895 / CBS 109.51 / FGSC 9923 / NRRL Y-1056) (Yeast), this protein is Adenylyltransferase and sulfurtransferase UBA4.